Here is a 1397-residue protein sequence, read N- to C-terminus: Protein RhsC (1397 aa).

Tandem repeats lie at residues 330–352 (NTQVRSFTYDDKYRGRMVAHRHT), 353–374 (GRPEICYRYDSDGRVTEQLNPA), 375–417 (GLSY…EHAD), 418–438 (GSVTQSQFDAVGRLRAQTDAA), 439–460 (GRTTEYSPDVVTGLITRITTPD), 461–481 (GRASAFYYNHHSQLTSATGPD), 482–502 (GLEIRREYDEWGRLIQETAPD), 503–525 (GDITRYRYDNPHSDLPCATEDAT), 526–546 (GSRKTMTWSRYGQLLSFTDCS), 547–567 (GYVTRYDHDRFGQVTAVHREE), 568–588 (GLSQYRAYDSRGQLIAVKDTQ), 589–609 (GHETRYEYNAAGDLTTVIAPD), 610–629 (GSRNGTQYDAWGKAICTTQG), 630–650 (GLTRSMEYDAAGRVIRLTSEN), 651–671 (GSHTTFRYDVLDRLIQETGFD), 672–691 (GRTQRYHHDLTGKLIRSEDE), 692–711 (GLVTHWHYDEADRLTHRTVN), 712–734 (GETAERWQYDERGWLTDISHISE), 735–758 (GHRVTVHYGYDSKGRLASEHLTVH), 808–828 (GDTPLVEYTRDRLHRETLRSF), 829–850 (GRYELTTAYTPAGQLQSQHLNS), 851–871 (LLSDRDYTWNDNGELIRISSP), 872–894 (RQTRSYSYSTTGRLTGVHTTAAN), 895–930 (LDIRIPYTTDPAGNRLPDPELHPDSALSMWPDNRIA), 931–959 (RDAHYLYRYDRHGRLTEKTDLIPEGVIRT), 960–984 (DDERTHRYHYDSQHRLVHYTRTQYA), 985–1019 (EPLVESRYLYDPLGRRVAKRVWRRERDLTGWMSLS), and 1162–1186 (GTTAWYAEYDEWGNLLNEENPHQLQ). Residues 330–1186 (NTQVRSFTYD…LNEENPHQLQ (857 aa)) are 28 X approximate tandem repeats. The segment at 1292-1312 (GGQDQRGESKGDGLWGPGKAS) is disordered.

The protein belongs to the RHS family.

Rhs elements have a nonessential function. They may play an important role in the natural ecology of the cell. The polypeptide is Protein RhsC (rhsC) (Escherichia coli (strain K12)).